A 322-amino-acid polypeptide reads, in one-letter code: RNA-binding motif protein, X-linked 2 (322 aa).

K8 participates in a covalent cross-link: Glycyl lysine isopeptide (Lys-Gly) (interchain with G-Cter in SUMO2). An RRM domain is found at 36–114; sequence AWIFLGGLPY…RTIRVDHVSN (79 aa). A disordered region spans residues 134 to 322; that stretch reads KGCGARTPSP…SSNPSDRWRH (189 aa). Position 140 is a phosphothreonine (T140). Position 149 is a phosphoserine (S149). The segment covering 155 to 171 has biased composition (basic residues); it reads TKKHKKDKKEKKKKKKE. Phosphoserine is present on residues S186 and S188. Positions 195-223 are enriched in basic and acidic residues; that stretch reads KEKDDTGPKKHSSKNSERAQKSEPREGQK. A Phosphoserine modification is found at S232. Residues 240-274 show a composition bias toward basic and acidic residues; that stretch reads RELKKEKPKHEHKSSSRREAREEKTRIRDRGRSSD. A Glycyl lysine isopeptide (Lys-Gly) (interchain with G-Cter in SUMO2) cross-link involves residue K243. S272 bears the Phosphoserine mark. Basic residues predominate over residues 289–308; that stretch reads YRSRSRSRDKSHRHKRARRS. Phosphoserine is present on S314.

It belongs to the IST3 family. As to quaternary structure, part of the activated spliceosome B/catalytic step 1 spliceosome, one of the forms of the spliceosome which has a well-formed active site but still cannot catalyze the branching reaction and is composed of at least 52 proteins, the U2, U5 and U6 snRNAs and the pre-mRNA. Component of the minor spliceosome, which splices U12-type introns.

Its subcellular location is the nucleus. In terms of biological role, involved in pre-mRNA splicing as component of the activated spliceosome. As a component of the minor spliceosome, involved in the splicing of U12-type introns in pre-mRNAs. The sequence is that of RNA-binding motif protein, X-linked 2 (RBMX2) from Homo sapiens (Human).